A 109-amino-acid polypeptide reads, in one-letter code: Cytochrome c (109 aa).

Heme c is bound by residues Cys-25, Cys-28, His-29, and Met-88.

This sequence belongs to the cytochrome c family. In terms of processing, binds 1 heme c group covalently per subunit.

It is found in the mitochondrion intermembrane space. Electron carrier protein. The oxidized form of the cytochrome c heme group can accept an electron from the heme group of the cytochrome c1 subunit of cytochrome reductase. Cytochrome c then transfers this electron to the cytochrome oxidase complex, the final protein carrier in the mitochondrial electron-transport chain. The protein is Cytochrome c of Tetrahymena pyriformis.